The following is a 563-amino-acid chain: Arginine--tRNA ligase (563 aa).

The short motif at 121–131 (PNIAKPFSIGH) is the 'HIGH' region element.

It belongs to the class-I aminoacyl-tRNA synthetase family. Monomer.

The protein localises to the cytoplasm. It carries out the reaction tRNA(Arg) + L-arginine + ATP = L-arginyl-tRNA(Arg) + AMP + diphosphate. The protein is Arginine--tRNA ligase of Streptococcus mutans serotype c (strain ATCC 700610 / UA159).